The following is a 226-amino-acid chain: Small ribosomal subunit protein uS3 (226 aa).

Positions 39–107 constitute a KH type-2 domain; it reads IRKFIKNKLY…NILINITEIK (69 aa).

The protein belongs to the universal ribosomal protein uS3 family. Part of the 30S ribosomal subunit. Forms a tight complex with proteins S10 and S14.

Binds the lower part of the 30S subunit head. Binds mRNA in the 70S ribosome, positioning it for translation. In Acetivibrio thermocellus (strain ATCC 27405 / DSM 1237 / JCM 9322 / NBRC 103400 / NCIMB 10682 / NRRL B-4536 / VPI 7372) (Clostridium thermocellum), this protein is Small ribosomal subunit protein uS3.